A 1055-amino-acid polypeptide reads, in one-letter code: Activated CDC42 kinase 1 (1055 aa).

The interval 1-110 is SAM-like domain; sequence MQPEEGTGWL…PSPTPGSLPG (110 aa). A disordered region spans residues 91–110; the sequence is SQHSQSTFRKPSPTPGSLPG. T113 carries the phosphothreonine modification. The Protein kinase domain occupies 126 to 385; sequence LRLLEKLGDG…PTFVALRDFL (260 aa). ATP contacts are provided by residues 132 to 140 and K158; that span reads LGDGSFGVV. D252 functions as the Proton acceptor in the catalytic mechanism. Y284 is subject to Phosphotyrosine; by SRC and autocatalysis. Residues 388 to 448 enclose the SH3 domain; the sequence is AQPTDMRALQ…PRNVVTSVAG (61 aa). Residues 454-466 form the CRIB domain; that stretch reads ISQPLQNSFIHTG. The disordered stretch occupies residues 505–548; it reads RPTQHLGRVKREPPPRPPQPAIFTQKTTYDPVSEDPDPLSSDFK. A phosphotyrosine mark is found at P518 and Y533. Positions 638 to 667 are required for interaction with SRC; it reads DWDARPLPPPPAYDDVAQDEDDFEVCSINS. Residues 647 to 650 form a required for interaction with NEDD4 region; the sequence is PPAY. Positions 737-855 are disordered; that stretch reads TGQLTPSPTP…QVIQAPGPRA (119 aa). Residues 748–891 are EBD domain; the sequence is GDDKPQVPPR…PYLERYQRFL (144 aa). Composition is skewed to pro residues over residues 753 to 764 and 787 to 798; these read QVPPRVPIPPRP and PASPPRVPPREP. Low complexity predominate over residues 817 to 827; sequence PLPHRLSSSPG. Y842 bears the Phosphotyrosine mark. Omega-N-methylarginine is present on R854. 2 positions are modified to phosphotyrosine: Y874 and Y887. S896 is modified (phosphoserine). The segment at 896–952 is disordered; it reads SPEEPAALPVPPLLPPPSTPAPAAPTATVRPMPQAAPDPKANFSTNNSNPGARPPSL. The span at 903 to 918 shows a compositional bias: pro residues; it reads LPVPPLLPPPSTPAPA. The UBA domain occupies 973 to 1013; that stretch reads PADKVQMLQAMVHGVTTEECQAALQSHSWSVQRAAQYLKVE.

This sequence belongs to the protein kinase superfamily. Tyr protein kinase family. As to quaternary structure, homodimer. Interacts with CSPG4 (activated). Interacts with MERTK (activated); stimulates autophosphorylation. May interact (phosphorylated) with HSP90AB1; maintains kinase activity. Interacts with NPHP1. Interacts with SNX9 (via SH3 domain). Interacts with SRC (via SH2 and SH3 domain). Part of a collagen stimulated complex involved in cell migration composed of CDC42, CRK, TNK2 and BCAR1/p130cas. Interacts with BCAR1/p130cas via SH3 domains. Forms complexes with GRB2 and numerous receptor tyrosine kinases (RTK) including LTK, AXL or PDGFRL, in which GRB2 promotes RTK recruitment by TNK2. Interacts with CDC42. Interacts with EGFR, and this interaction is dependent on EGF stimulation and kinase activity of EGFR. Interacts (via kinase domain) with AKT1. Interacts with NEDD4 (via WW3 domain). NEDD4L and EGF promote association with NEDD4. Mg(2+) is required as a cofactor. Post-translationally, autophosphorylation regulates kinase activity. Phosphorylation on Tyr-533 is required for interaction with SRC and is observed during association with clathrin-coated pits. Polyubiquitinated by NEDD4 and NEDD4L. Degradation can be induced by EGF and is lysosome-dependent. In terms of tissue distribution, ubiquitously present in all tissues tested. Highly expressed in the adult central nervous system (CNS); hippocampus, neocortex, and cerebellum, both at dendritic spines and presynaptic axon terminals. Levels are strongly increased during enhanced neural activity.

It localises to the cell membrane. The protein localises to the nucleus. It is found in the endosome. Its subcellular location is the cell junction. The protein resides in the adherens junction. It localises to the cytoplasmic vesicle membrane. The protein localises to the cytoplasmic vesicle. It is found in the clathrin-coated vesicle. Its subcellular location is the membrane. The protein resides in the clathrin-coated pit. It localises to the cytoplasm. The protein localises to the cytosol. It catalyses the reaction L-tyrosyl-[protein] + ATP = O-phospho-L-tyrosyl-[protein] + ADP + H(+). The catalysed reaction is L-seryl-[protein] + ATP = O-phospho-L-seryl-[protein] + ADP + H(+). The enzyme catalyses L-threonyl-[protein] + ATP = O-phospho-L-threonyl-[protein] + ADP + H(+). In terms of biological role, non-receptor tyrosine-protein and serine/threonine-protein kinase that is implicated in cell spreading and migration, cell survival, cell growth and proliferation. Transduces extracellular signals to cytosolic and nuclear effectors. Phosphorylates AKT1, AR, MCF2, WASL and WWOX. Implicated in trafficking and clathrin-mediated endocytosis through binding to epidermal growth factor receptor (EGFR) and clathrin. Binds to both poly- and mono-ubiquitin and regulates ligand-induced degradation of EGFR, thereby contributing to the accumulation of EGFR at the limiting membrane of early endosomes. Downstream effector of CDC42 which mediates CDC42-dependent cell migration via phosphorylation of BCAR1. May be involved both in adult synaptic function and plasticity and in brain development. Activates AKT1 by phosphorylating it on 'Tyr-176'. Phosphorylates AR on 'Tyr-267' and 'Tyr-363' thereby promoting its recruitment to androgen-responsive enhancers (AREs). Phosphorylates WWOX on 'Tyr-287'. Phosphorylates MCF2, thereby enhancing its activity as a guanine nucleotide exchange factor (GEF) toward Rho family proteins. Contributes to the control of AXL receptor levels. Confers metastatic properties on cancer cells and promotes tumor growth by negatively regulating tumor suppressor such as WWOX and positively regulating pro-survival factors such as AKT1 and AR. The polypeptide is Activated CDC42 kinase 1 (Tnk2) (Mus musculus (Mouse)).